Consider the following 389-residue polypeptide: DNA replication and repair protein RecF (389 aa).

30–37 (GPNGFGKT) contacts ATP.

Belongs to the RecF family.

It localises to the cytoplasm. The RecF protein is involved in DNA metabolism; it is required for DNA replication and normal SOS inducibility. RecF binds preferentially to single-stranded, linear DNA. It also seems to bind ATP. The protein is DNA replication and repair protein RecF of Mycolicibacterium gilvum (strain PYR-GCK) (Mycobacterium gilvum (strain PYR-GCK)).